The chain runs to 115 residues: Phosphoribosyl-ATP pyrophosphatase (115 aa).

This sequence belongs to the PRA-PH family.

It localises to the cytoplasm. The enzyme catalyses 1-(5-phospho-beta-D-ribosyl)-ATP + H2O = 1-(5-phospho-beta-D-ribosyl)-5'-AMP + diphosphate + H(+). The protein operates within amino-acid biosynthesis; L-histidine biosynthesis; L-histidine from 5-phospho-alpha-D-ribose 1-diphosphate: step 2/9. The protein is Phosphoribosyl-ATP pyrophosphatase of Bordetella bronchiseptica (strain ATCC BAA-588 / NCTC 13252 / RB50) (Alcaligenes bronchisepticus).